We begin with the raw amino-acid sequence, 101 residues long: UPF0060 membrane protein ACIAD1364 (101 aa).

A run of 3 helical transmembrane segments spans residues 24–44 (WLWL…TLHP), 50–70 (IYAA…RFID), and 79–99 (IWGG…PQGL).

Belongs to the UPF0060 family.

It localises to the cell inner membrane. The polypeptide is UPF0060 membrane protein ACIAD1364 (Acinetobacter baylyi (strain ATCC 33305 / BD413 / ADP1)).